Here is a 254-residue protein sequence, read N- to C-terminus: D-aminoacyl-tRNA deacylase (254 aa).

The tract at residues 61 to 85 (KPTLTVHTPGNLTEDNSRGGNSEEI) is disordered. Residues 65–84 (TVHTPGNLTEDNSRGGNSEE) are compositionally biased toward polar residues.

The protein belongs to the DtdA deacylase family. Monomer. Requires Zn(2+) as cofactor.

The enzyme catalyses a D-aminoacyl-tRNA + H2O = a tRNA + a D-alpha-amino acid + H(+). The catalysed reaction is glycyl-tRNA(Ala) + H2O = tRNA(Ala) + glycine + H(+). Its function is as follows. D-aminoacyl-tRNA deacylase with broad substrate specificity. By recycling D-aminoacyl-tRNA to D-amino acids and free tRNA molecules, this enzyme counteracts the toxicity associated with the formation of D-aminoacyl-tRNA entities in vivo. This is D-aminoacyl-tRNA deacylase from Methanococcus maripaludis (strain C5 / ATCC BAA-1333).